We begin with the raw amino-acid sequence, 222 residues long: Peptide methionine sulfoxide reductase MsrA (222 aa).

Residue C60 is part of the active site.

It belongs to the MsrA Met sulfoxide reductase family.

The catalysed reaction is L-methionyl-[protein] + [thioredoxin]-disulfide + H2O = L-methionyl-(S)-S-oxide-[protein] + [thioredoxin]-dithiol. It carries out the reaction [thioredoxin]-disulfide + L-methionine + H2O = L-methionine (S)-S-oxide + [thioredoxin]-dithiol. Its function is as follows. Has an important function as a repair enzyme for proteins that have been inactivated by oxidation. Catalyzes the reversible oxidation-reduction of methionine sulfoxide in proteins to methionine. This chain is Peptide methionine sulfoxide reductase MsrA, found in Pseudomonas putida (strain GB-1).